The chain runs to 235 residues: Purine nucleoside phosphorylase DeoD-type (235 aa).

Histidine 4 serves as a coordination point for a purine D-ribonucleoside. Phosphate-binding positions include glycine 20, arginine 24, arginine 43, and 87 to 90 (RVGT). Residues 179–181 (EME) and 203–204 (SN) contribute to the a purine D-ribonucleoside site.

The protein belongs to the PNP/UDP phosphorylase family. As to quaternary structure, homohexamer; trimer of homodimers.

The enzyme catalyses a purine D-ribonucleoside + phosphate = a purine nucleobase + alpha-D-ribose 1-phosphate. It catalyses the reaction a purine 2'-deoxy-D-ribonucleoside + phosphate = a purine nucleobase + 2-deoxy-alpha-D-ribose 1-phosphate. Functionally, catalyzes the reversible phosphorolytic breakdown of the N-glycosidic bond in the beta-(deoxy)ribonucleoside molecules, with the formation of the corresponding free purine bases and pentose-1-phosphate. The chain is Purine nucleoside phosphorylase DeoD-type from Levilactobacillus brevis (strain ATCC 367 / BCRC 12310 / CIP 105137 / JCM 1170 / LMG 11437 / NCIMB 947 / NCTC 947) (Lactobacillus brevis).